Reading from the N-terminus, the 553-residue chain is Thioredoxin domain-containing protein 2 (553 aa).

2 disordered regions span residues 1–37 and 77–442; these read MDVD…DANE and TEES…EETM. Basic and acidic residues predominate over residues 99–143; it reads PKQDDSPKSSEETIQPKEGDIPKAPEETIQSKKEDLPKSSEKAIQ. Tandem repeats lie at residues 113–127, 128–142, 143–157, 158–172, 173–187, 188–202, 203–217, 218–232, 233–247, 248–262, 263–277, 278–292, 293–307, 308–322, 323–337, 338–352, 353–367, 368–382, 383–397, 398–412, 413–427, and 428–442. The 22 X 15 AA approximate tandem repeat of Q-P-K-X-G-D-I-P-K-S-[PS]-E-[KE]-X-I stretch occupies residues 113 to 442; it reads QPKEGDIPKA…DILKPEEETM (330 aa). The span at 173–209 shows a compositional bias: basic and acidic residues; the sequence is QPKEGDIPKAPEETIQSKKEDLPKSSEEAIQPKEGDI. The segment covering 233–254 has biased composition (basic and acidic residues); sequence QPKESDIPKSPEETIQPKEGDI. Composition is skewed to basic and acidic residues over residues 278-376 and 385-439; these read QPKE…DIPK and KEGD…KPEE. The residue at position 362 (S362) is a Phosphoserine. S392 bears the Phosphoserine mark. The Thioredoxin domain maps to 429–553; the sequence is SKEGDILKPE…KLEAVIAELK (125 aa). Cysteines 480 and 483 form a disulfide.

Testis-specific. Only expressed during spermiogenesis, prominently in round and elongating spermatids.

Its subcellular location is the cytoplasm. Its function is as follows. Probably plays a regulatory role in sperm development. May participate in regulation of fibrous sheath (FS) assembly by supporting the formation of disulfide bonds during sperm tail morphogenesis. May also be required to rectify incorrect disulfide pairing and generate suitable pairs between the FS constituents. Can reduce disulfide bonds in vitro in the presence of NADP and thioredoxin reductase. The protein is Thioredoxin domain-containing protein 2 (TXNDC2) of Homo sapiens (Human).